The following is a 522-amino-acid chain: Secreted RxLR effector protein 105 (522 aa).

A signal peptide spans 1–21 (MRGPCSVITALLVVASSQIAA). The RxLR-dEER signature appears at 48–63 (RYLRGSQHVLDSNEER).

This sequence belongs to the RxLR effector family.

The protein resides in the secreted. The protein localises to the host nucleus. It is found in the host cytoplasm. In terms of biological role, secreted effector that dos not suppress the host cell death induced by cell death-inducing proteins. The chain is Secreted RxLR effector protein 105 from Plasmopara viticola (Downy mildew of grapevine).